Reading from the N-terminus, the 652-residue chain is DNA ligase (652 aa).

NAD(+) is bound by residues 29–33 (DSDYD), 78–79 (SL), and Glu107. Catalysis depends on Lys109, which acts as the N6-AMP-lysine intermediate. 4 residues coordinate NAD(+): Arg130, Glu164, Lys278, and Lys302. Positions 395, 398, 413, and 418 each coordinate Zn(2+). The 76-residue stretch at 577 to 652 (NSDAALFGLT…IEDEDWLRKL (76 aa)) folds into the BRCT domain.

The protein belongs to the NAD-dependent DNA ligase family. LigA subfamily. The cofactor is Mg(2+). Requires Mn(2+) as cofactor.

The catalysed reaction is NAD(+) + (deoxyribonucleotide)n-3'-hydroxyl + 5'-phospho-(deoxyribonucleotide)m = (deoxyribonucleotide)n+m + AMP + beta-nicotinamide D-nucleotide.. DNA ligase that catalyzes the formation of phosphodiester linkages between 5'-phosphoryl and 3'-hydroxyl groups in double-stranded DNA using NAD as a coenzyme and as the energy source for the reaction. It is essential for DNA replication and repair of damaged DNA. The chain is DNA ligase from Streptococcus pyogenes serotype M18 (strain MGAS8232).